The sequence spans 226 residues: UPF0758 protein SPD_0975 (226 aa).

The MPN domain maps to 103–225; that stretch reads SILSSQKLAK…YFSYREKTDL (123 aa). The Zn(2+) site is built by H174, H176, and D187. A JAMM motif motif is present at residues 174–187; it reads HNHPSGAVAPSQND.

Belongs to the UPF0758 family.

The polypeptide is UPF0758 protein SPD_0975 (Streptococcus pneumoniae serotype 2 (strain D39 / NCTC 7466)).